A 60-amino-acid polypeptide reads, in one-letter code: Large ribosomal subunit protein bL33 (60 aa).

This sequence belongs to the bacterial ribosomal protein bL33 family.

This chain is Large ribosomal subunit protein bL33, found in Chlorobaculum tepidum (strain ATCC 49652 / DSM 12025 / NBRC 103806 / TLS) (Chlorobium tepidum).